A 163-amino-acid polypeptide reads, in one-letter code: Cuticle protein 38 (163 aa).

14 repeat units span residues Ala-7–Val-10, Ala-13–Ala-16, Ala-20–Ala-23, Ala-26–Val-29, Ala-56–Ala-59, Ala-62–Ala-65, Ala-68–Ala-71, Ala-75–Ala-78, Ala-81–Ala-84, Ala-93–Val-96, Ala-123–Ala-126, Ala-135–Ala-138, Ala-141–Ala-144, and Ala-156–Val-159.

Its function is as follows. Component of the cuticle of migratory locust which contains more than 100 different structural proteins. This chain is Cuticle protein 38, found in Locusta migratoria (Migratory locust).